Here is a 358-residue protein sequence, read N- to C-terminus: Mesaconyl-CoA hydratase (358 aa).

It belongs to the enoyl-CoA hydratase/isomerase family. As to quaternary structure, homodimer.

The catalysed reaction is (2R,3S)-beta-methylmalyl-CoA = 2-methylfumaryl-CoA + H2O. With respect to regulation, shows highest activity at 0.5 M KCl. Does not require divalent ions for activity. Functionally, involved in the methylaspartate cycle. Catalyzes the reversible hydration of mesaconyl-CoA (2-methylfumaryl-CoA) to yield beta-methylmalyl-CoA ((2R,3S)-beta-methylmalyl-CoA). Also shows activity with mesaconyl-C4-CoA (3-methylfumaryl-CoA), (S)-citramalyl-CoA and (S)-malyl-CoA. The polypeptide is Mesaconyl-CoA hydratase (Haloarcula hispanica (strain ATCC 33960 / DSM 4426 / JCM 8911 / NBRC 102182 / NCIMB 2187 / VKM B-1755)).